A 166-amino-acid chain; its full sequence is Phosphopantetheine adenylyltransferase (166 aa).

Serine 9 contributes to the substrate binding site. ATP-binding positions include 9–10 and histidine 17; that span reads SF. Substrate-binding residues include lysine 41, leucine 74, and lysine 88. ATP is bound by residues 89–91, glutamate 99, and 123–129; these read GLR and YVHLSST.

This sequence belongs to the bacterial CoaD family. In terms of assembly, homohexamer. The cofactor is Mg(2+).

Its subcellular location is the cytoplasm. It carries out the reaction (R)-4'-phosphopantetheine + ATP + H(+) = 3'-dephospho-CoA + diphosphate. It functions in the pathway cofactor biosynthesis; coenzyme A biosynthesis; CoA from (R)-pantothenate: step 4/5. In terms of biological role, reversibly transfers an adenylyl group from ATP to 4'-phosphopantetheine, yielding dephospho-CoA (dPCoA) and pyrophosphate. The sequence is that of Phosphopantetheine adenylyltransferase from Paenarthrobacter aurescens (strain TC1).